The following is a 509-amino-acid chain: Meiotic fizzy-related protein 2 (509 aa).

WD repeat units lie at residues 159–196 (LDDF…SIME), 199–238 (PTTY…NRCD), 242–281 (HHDG…MRRV), 287–326 (VHQE…NKKF), 329–371 (IHLA…RIHS), and 437–477 (IHTH…QEIH).

It belongs to the WD repeat CDC20/Fizzy family.

The protein resides in the nucleus. In terms of biological role, has a role in meiosis. The chain is Meiotic fizzy-related protein 2 (mfr2) from Schizosaccharomyces pombe (strain 972 / ATCC 24843) (Fission yeast).